A 164-amino-acid chain; its full sequence is Lectin (164 aa).

The N-terminal stretch at 1-15 (TVATILTILASTCMA) is a signal peptide. The region spanning 16 to 125 (RNVLVNNEGL…DIWSTGTYRK (110 aa)) is the Bulb-type lectin domain. Residues cysteine 44 and cysteine 68 are joined by a disulfide bond.

In terms of assembly, homotetramer. Post-translationally, not glycosylated.

Its function is as follows. Mannose-specific lectin. Induces a Th1-type immune response in vitro. Causes a 4-fold increase in the proliferation of murine thymocytes and a significant increase in the production of nitric oxide at 24 hours in a macrophage cell line. Stimulates the production of the pro-inflammatory cytokines TNF and IL12 by rat peritoneal macrophages in a dose-dependent manner and of the cytokines IFNG and IL2 in murine thymocytes. Has hemagglutination activity towards rabbit erythrocytes. The polypeptide is Lectin (Allium cepa (Onion)).